A 432-amino-acid chain; its full sequence is Tol-Pal system protein TolB (432 aa).

The signal sequence occupies residues 1 to 24 (MKLVTRMWSILIVFFLAVLQPAQA).

This sequence belongs to the TolB family. As to quaternary structure, the Tol-Pal system is composed of five core proteins: the inner membrane proteins TolA, TolQ and TolR, the periplasmic protein TolB and the outer membrane protein Pal. They form a network linking the inner and outer membranes and the peptidoglycan layer.

The protein localises to the periplasm. Functionally, part of the Tol-Pal system, which plays a role in outer membrane invagination during cell division and is important for maintaining outer membrane integrity. This Pasteurella multocida (strain Pm70) protein is Tol-Pal system protein TolB.